The following is a 276-amino-acid chain: Undecaprenyl-diphosphatase (276 aa).

The next 7 membrane-spanning stretches (helical) occupy residues 42–62, 88–108, 116–136, 149–169, 187–207, 222–242, and 253–273; these read AVTA…IVYF, ALLG…GYLG, LRSL…IVYA, MRLP…VPGV, VAAT…AGIF, SLVV…AWLL, and FVWY…TGLV.

This sequence belongs to the UppP family.

It is found in the cell membrane. It carries out the reaction di-trans,octa-cis-undecaprenyl diphosphate + H2O = di-trans,octa-cis-undecaprenyl phosphate + phosphate + H(+). Its function is as follows. Catalyzes the dephosphorylation of undecaprenyl diphosphate (UPP). Confers resistance to bacitracin. This Acidothermus cellulolyticus (strain ATCC 43068 / DSM 8971 / 11B) protein is Undecaprenyl-diphosphatase.